The following is a 369-amino-acid chain: 4-hydroxy-3-methylbut-2-en-1-yl diphosphate synthase (flavodoxin) (369 aa).

The [4Fe-4S] cluster site is built by Cys268, Cys271, Cys303, and Glu310.

The protein belongs to the IspG family. [4Fe-4S] cluster serves as cofactor.

It catalyses the reaction (2E)-4-hydroxy-3-methylbut-2-enyl diphosphate + oxidized [flavodoxin] + H2O + 2 H(+) = 2-C-methyl-D-erythritol 2,4-cyclic diphosphate + reduced [flavodoxin]. It participates in isoprenoid biosynthesis; isopentenyl diphosphate biosynthesis via DXP pathway; isopentenyl diphosphate from 1-deoxy-D-xylulose 5-phosphate: step 5/6. Functionally, converts 2C-methyl-D-erythritol 2,4-cyclodiphosphate (ME-2,4cPP) into 1-hydroxy-2-methyl-2-(E)-butenyl 4-diphosphate. The sequence is that of 4-hydroxy-3-methylbut-2-en-1-yl diphosphate synthase (flavodoxin) from Exiguobacterium sibiricum (strain DSM 17290 / CCUG 55495 / CIP 109462 / JCM 13490 / 255-15).